A 248-amino-acid polypeptide reads, in one-letter code: Adenosylcobinamide-GDP ribazoletransferase (248 aa).

The next 6 membrane-spanning stretches (helical) occupy residues 36 to 56 (FFLP…YLGL), 59 to 79 (FLPP…ITGG), 113 to 133 (FGTI…YSLV), 137 to 157 (CSIA…FLCL), 170 to 190 (IFIG…ALAM), and 199 to 219 (ITII…LLCL).

Belongs to the CobS family. Requires Mg(2+) as cofactor.

The protein resides in the cell membrane. It carries out the reaction alpha-ribazole + adenosylcob(III)inamide-GDP = adenosylcob(III)alamin + GMP + H(+). The catalysed reaction is alpha-ribazole 5'-phosphate + adenosylcob(III)inamide-GDP = adenosylcob(III)alamin 5'-phosphate + GMP + H(+). It participates in cofactor biosynthesis; adenosylcobalamin biosynthesis; adenosylcobalamin from cob(II)yrinate a,c-diamide: step 7/7. In terms of biological role, joins adenosylcobinamide-GDP and alpha-ribazole to generate adenosylcobalamin (Ado-cobalamin). Also synthesizes adenosylcobalamin 5'-phosphate from adenosylcobinamide-GDP and alpha-ribazole 5'-phosphate. The protein is Adenosylcobinamide-GDP ribazoletransferase of Clostridium botulinum (strain 657 / Type Ba4).